We begin with the raw amino-acid sequence, 164 residues long: Phosphopantetheine adenylyltransferase (164 aa).

Serine 9 contributes to the substrate binding site. Residues 9 to 10 (SF) and histidine 17 contribute to the ATP site. Substrate-binding residues include lysine 41, leucine 73, and lysine 87. Residues 88 to 90 (GLR), glutamate 98, and 123 to 129 (YSYLSSS) each bind ATP.

Belongs to the bacterial CoaD family. As to quaternary structure, homohexamer. It depends on Mg(2+) as a cofactor.

It is found in the cytoplasm. The enzyme catalyses (R)-4'-phosphopantetheine + ATP + H(+) = 3'-dephospho-CoA + diphosphate. The protein operates within cofactor biosynthesis; coenzyme A biosynthesis; CoA from (R)-pantothenate: step 4/5. Reversibly transfers an adenylyl group from ATP to 4'-phosphopantetheine, yielding dephospho-CoA (dPCoA) and pyrophosphate. In Clostridium botulinum (strain Okra / Type B1), this protein is Phosphopantetheine adenylyltransferase.